A 97-amino-acid chain; its full sequence is DNA-directed RNA polymerase subunit omega (97 aa).

This sequence belongs to the RNA polymerase subunit omega family. The RNAP catalytic core consists of 2 alpha, 1 beta, 1 beta' and 1 omega subunit. When a sigma factor is associated with the core the holoenzyme is formed, which can initiate transcription.

The catalysed reaction is RNA(n) + a ribonucleoside 5'-triphosphate = RNA(n+1) + diphosphate. Promotes RNA polymerase assembly. Latches the N- and C-terminal regions of the beta' subunit thereby facilitating its interaction with the beta and alpha subunits. This is DNA-directed RNA polymerase subunit omega from Coxiella burnetii (strain CbuK_Q154) (Coxiella burnetii (strain Q154)).